The sequence spans 348 residues: tRNA N6-adenosine threonylcarbamoyltransferase (348 aa).

Residues His115 and His119 each contribute to the Fe cation site. Residues 137-141 (LASGG), Asp170, Gly183, and Asn281 each bind substrate. Asp309 provides a ligand contact to Fe cation.

The protein belongs to the KAE1 / TsaD family. Fe(2+) is required as a cofactor.

The protein localises to the cytoplasm. It carries out the reaction L-threonylcarbamoyladenylate + adenosine(37) in tRNA = N(6)-L-threonylcarbamoyladenosine(37) in tRNA + AMP + H(+). Its function is as follows. Required for the formation of a threonylcarbamoyl group on adenosine at position 37 (t(6)A37) in tRNAs that read codons beginning with adenine. Is involved in the transfer of the threonylcarbamoyl moiety of threonylcarbamoyl-AMP (TC-AMP) to the N6 group of A37, together with TsaE and TsaB. TsaD likely plays a direct catalytic role in this reaction. The sequence is that of tRNA N6-adenosine threonylcarbamoyltransferase from Methylobacterium sp. (strain 4-46).